Consider the following 83-residue polypeptide: Putative defensin-like protein 131 (83 aa).

Residues 1–34 (MAKNRVLTIFYCTIYYCICFKYVLLGMVVEKTQG) form the signal peptide. 4 disulfide bridges follow: Cys-37-Cys-83, Cys-46-Cys-65, Cys-51-Cys-77, and Cys-55-Cys-79.

Belongs to the DEFL family.

It localises to the secreted. This is Putative defensin-like protein 131 (LCR29) from Arabidopsis thaliana (Mouse-ear cress).